We begin with the raw amino-acid sequence, 175 residues long: Alpha-crystallin B chain (175 aa).

Methionine 1 is modified (N-acetylmethionine). Serine 19 is subject to Phosphoserine. O-linked (GlcNAc) serine glycosylation is present at serine 41. 2 positions are modified to phosphoserine: serine 45 and serine 59. The 109-residue stretch at 56–164 folds into the sHSP domain; sequence RAPSWIDTGL…PERTIPITRE (109 aa). Position 83 (histidine 83) interacts with Zn(2+). Lysine 92 carries the N6-acetyllysine modification. The Zn(2+) site is built by histidine 104, glutamate 106, histidine 111, and histidine 119. The tract at residues 142 to 175 is disordered; that stretch reads VLTVNGPRKQASGPERTIPITREEKPAVTAAPKK. The residue at position 166 (lysine 166) is an N6-acetyllysine. O-linked (GlcNAc) threonine glycosylation occurs at threonine 170.

This sequence belongs to the small heat shock protein (HSP20) family. Heteromer composed of three CRYAA and one CRYAB subunits. Aggregates with homologous proteins, including the small heat shock protein HSPB1, to form large heteromeric complexes. Inter-subunit bridging via zinc ions enhances stability, which is crucial as there is no protein turn over in the lens. Interacts with HSPBAP1 and TTN/titin. Interacts with TMEM109; in the cellular response to DNA damage. Interacts with DES; binds rapidly during early stages of DES filament assembly and a reduced binding seen in the later stages. Interacts with ATP6V1A and with MTOR, forming a ternary complex. Lens as well as other tissues.

Its subcellular location is the cytoplasm. It localises to the nucleus. The protein resides in the secreted. It is found in the lysosome. Its function is as follows. May contribute to the transparency and refractive index of the lens. Has chaperone-like activity, preventing aggregation of various proteins under a wide range of stress conditions. In lens epithelial cells, stabilizes the ATP6V1A protein, preventing its degradation by the proteasome. This chain is Alpha-crystallin B chain (CRYAB), found in Spalax judaei (Judean Mountains blind mole rat).